A 299-amino-acid chain; its full sequence is Somaliensene A/B synthase (299 aa).

A run of 7 helical transmembrane segments spans residues Trp32 to Thr49, Thr56 to Tyr72, Ile110 to Trp132, Leu153 to Ala171, Ala177 to Val194, Val222 to Ala241, and Trp247 to Leu269.

Belongs to the UbiA prenyltransferase family. Mg(2+) serves as cofactor.

It is found in the cell membrane. It carries out the reaction (2E,6E,10E,14E)-geranylfarnesyl diphosphate = somaliensene A + diphosphate. It catalyses the reaction (2E,6E,10E,14E)-geranylfarnesyl diphosphate = (-)-somaliensene B + diphosphate. Its pathway is secondary metabolite biosynthesis; terpenoid biosynthesis. Sesterterpene cyclase, which converts geranylfarnesyl diphosphate (GFPP) into the terpenes somaliensene A and somaliensene B. In Streptomyces somaliensis (strain ATCC 33201 / DSM 40738 / JCM 12659 / KCTC 9044 / NCTC 11332 / NRRL B-12077 / IP 733), this protein is Somaliensene A/B synthase.